The following is a 169-amino-acid chain: Biogenesis of lysosome-related organelles complex 1 subunit 4 (169 aa).

This sequence belongs to the BLOC1S4 family. Component of the biogenesis of lysosome-related organelles complex-1 (BLOC-1) composed of Blos1, Blos2, Blos3, Blos4, Dysb, Muted, Pldn and Snapin. Interacts with Pldn.

Functionally, component of the biogenesis of lysosome-related organelles complex-1 (BLOC-1) involved in pigment granule biogenesis. In Drosophila melanogaster (Fruit fly), this protein is Biogenesis of lysosome-related organelles complex 1 subunit 4.